The following is an 855-amino-acid chain: Leucine--tRNA ligase (855 aa).

A 'HIGH' region motif is present at residues 42 to 52 (PYPSGSLHVGH). Residues 292-311 (SEMDRTAEDKPKKGIPTGGK) are disordered. Residues 293–303 (EMDRTAEDKPK) are compositionally biased toward basic and acidic residues. Positions 614-618 (KMSKS) match the 'KMSKS' region motif. Lys-617 provides a ligand contact to ATP.

This sequence belongs to the class-I aminoacyl-tRNA synthetase family.

The protein resides in the cytoplasm. The catalysed reaction is tRNA(Leu) + L-leucine + ATP = L-leucyl-tRNA(Leu) + AMP + diphosphate. This chain is Leucine--tRNA ligase, found in Acaryochloris marina (strain MBIC 11017).